The primary structure comprises 130 residues: MKKLEDVGVLVARILMPILFITAGWGKITGYAGTQQYMEAMGVPGFMLPLVILLEFGGGLAILFGFLTRTTALFTAGFTLLTAFLFHSNFAEGVNSLMFMKNLTISGGFLLLAITGPGAYSIDRLLNKKW.

At 1-5 (MKKLE) the chain is on the cytoplasmic side. A helical membrane pass occupies residues 6-26 (DVGVLVARILMPILFITAGWG). Over 27 to 45 (KITGYAGTQQYMEAMGVPG) the chain is Periplasmic. A helical membrane pass occupies residues 46–66 (FMLPLVILLEFGGGLAILFGF). Residues 67 to 70 (LTRT) are Cytoplasmic-facing. A helical membrane pass occupies residues 71–91 (TALFTAGFTLLTAFLFHSNFA). The Periplasmic segment spans residues 92-101 (EGVNSLMFMK). Residues 102–122 (NLTISGGFLLLAITGPGAYSI) traverse the membrane as a helical segment. Topologically, residues 123–130 (DRLLNKKW) are cytoplasmic.

Belongs to the DoxX family.

It is found in the cell inner membrane. The polypeptide is Inner membrane protein YqjF (yqjF) (Escherichia coli (strain K12)).